A 211-amino-acid chain; its full sequence is Cytochrome c biogenesis ATP-binding export protein CcmA (211 aa).

In terms of domain architecture, ABC transporter spans 6–211 (LQTVALACER…RDIDLGNWAV (206 aa)). ATP is bound at residue 38–45 (GPNGSGKT).

It belongs to the ABC transporter superfamily. CcmA exporter (TC 3.A.1.107) family. In terms of assembly, the complex is composed of two ATP-binding proteins (CcmA) and two transmembrane proteins (CcmB).

The protein resides in the cell inner membrane. It catalyses the reaction heme b(in) + ATP + H2O = heme b(out) + ADP + phosphate + H(+). Its function is as follows. Part of the ABC transporter complex CcmAB involved in the biogenesis of c-type cytochromes; once thought to export heme, this seems not to be the case, but its exact role is uncertain. Responsible for energy coupling to the transport system. The chain is Cytochrome c biogenesis ATP-binding export protein CcmA from Pseudomonas fluorescens (strain Pf0-1).